We begin with the raw amino-acid sequence, 606 residues long: Glutamine--fructose-6-phosphate aminotransferase [isomerizing] (606 aa).

C2 acts as the Nucleophile; for GATase activity in catalysis. The Glutamine amidotransferase type-2 domain maps to 2–218 (CGIFGYLGEK…SGELAVLRIG (217 aa)). 2 consecutive SIS domains span residues 278–424 (FTES…HRQV) and 448–596 (LDSS…VDRP). The active-site For Fru-6P isomerization activity is K601.

In terms of assembly, homodimer.

The protein localises to the cytoplasm. It catalyses the reaction D-fructose 6-phosphate + L-glutamine = D-glucosamine 6-phosphate + L-glutamate. Catalyzes the first step in hexosamine metabolism, converting fructose-6P into glucosamine-6P using glutamine as a nitrogen source. This chain is Glutamine--fructose-6-phosphate aminotransferase [isomerizing], found in Chlamydia trachomatis serovar D (strain ATCC VR-885 / DSM 19411 / UW-3/Cx).